Consider the following 131-residue polypeptide: Lysosomal enzyme trafficking factor (131 aa).

The next 2 helical transmembrane spans lie at 8–28 and 66–86; these read MGWI…YYVF and LPFW…FLFL.

The protein belongs to the LYSET family.

It localises to the golgi apparatus membrane. Required for mannose-6-phosphate-dependent trafficking of lysosomal enzymes. LYSET bridges GlcNAc-1-phosphate transferase (GNPTAB), to the membrane-bound transcription factor site-1 protease (MBTPS1), thus allowing proteolytic activation of the GNPTAB. GNPTAB is involved in the regulation of M6P-dependent Golgi-to-lysosome trafficking of lysosomal enzymes. LYSET is thus an essential factor for maturation and delivery of lysosomal hydrolases. The sequence is that of Lysosomal enzyme trafficking factor (lyset-a) from Xenopus laevis (African clawed frog).